Reading from the N-terminus, the 269-residue chain is Mitochondrial scaffolding protein 1 (269 aa).

Residues 49 to 121 form the PDZ domain; sequence VVEIEKTSKG…HDEAVEVFRS (73 aa). The tract at residues 143–185 is disordered; it reads RTQTPTASVSITPQVTPQTRSTQNNTDTPKSMSHSESKSRLTS. Positions 145 to 174 are enriched in polar residues; it reads QTPTASVSITPQVTPQTRSTQNNTDTPKSM. The helical transmembrane segment at 240–262 threads the bilayer; the sequence is WLTEALYVSIGLGALTISGYLAY.

Its subcellular location is the membrane. Plays a role in the regulation of lifespan in a partially daf-16-mediated manner, and may be involved in regulating the levels of reactive oxygen species production in response to heat stress. The polypeptide is Mitochondrial scaffolding protein 1 (Caenorhabditis elegans).